A 317-amino-acid chain; its full sequence is Endochitinase 3 (317 aa).

A signal peptide spans 1-19 (MFVRNALVVTGLLAALTQA). N-linked (GlcNAc...) asparagine glycosylation is found at N25, N49, and N169. The region spanning 29–317 (HKLTVYWGAE…NYQKEIKANL (289 aa)) is the GH18 domain. E170 acts as the Proton donor in catalysis. N245 is a glycosylation site (N-linked (GlcNAc...) asparagine).

Belongs to the glycosyl hydrolase 18 family. Chitinase class III subfamily.

It localises to the secreted. The enzyme catalyses Random endo-hydrolysis of N-acetyl-beta-D-glucosaminide (1-&gt;4)-beta-linkages in chitin and chitodextrins.. Its function is as follows. Secreted chitinase involved in the degradation of chitin, a component of the cell walls of fungi and exoskeletal elements of some animals (including worms and arthropods). Participates in the infection process and directly acts in the penetration process of the host cuticle. Involved in heat-shock adaptation. This chain is Endochitinase 3 (chi3), found in Metarhizium robertsii (strain ARSEF 23 / ATCC MYA-3075) (Metarhizium anisopliae (strain ARSEF 23)).